A 141-amino-acid chain; its full sequence is Nucleoside triphosphatase NudI (141 aa).

Positions 1–141 (MRQRTIVCPL…RKTLRLKGLL (141 aa)) constitute a Nudix hydrolase domain. A Nudix box motif is present at residues 38 to 59 (GGVEPGERIEEALRREIREELG).

The protein belongs to the Nudix hydrolase family. NudI subfamily. In terms of assembly, monomer. Requires Mg(2+) as cofactor.

It catalyses the reaction a ribonucleoside 5'-triphosphate + H2O = a ribonucleoside 5'-phosphate + diphosphate + H(+). The enzyme catalyses a 2'-deoxyribonucleoside 5'-triphosphate + H2O = a 2'-deoxyribonucleoside 5'-phosphate + diphosphate + H(+). The catalysed reaction is dUTP + H2O = dUMP + diphosphate + H(+). It carries out the reaction dTTP + H2O = dTMP + diphosphate + H(+). It catalyses the reaction dCTP + H2O = dCMP + diphosphate + H(+). Its function is as follows. Catalyzes the hydrolysis of nucleoside triphosphates, with a preference for pyrimidine deoxynucleoside triphosphates (dUTP, dTTP and dCTP). This is Nucleoside triphosphatase NudI from Escherichia coli (strain ATCC 8739 / DSM 1576 / NBRC 3972 / NCIMB 8545 / WDCM 00012 / Crooks).